The sequence spans 150 residues: Nitric oxide reductase subunit C (150 aa).

A helical; Signal-anchor transmembrane segment spans residues 13 to 29 (VFYGGSIFFILIFGALT). Heme c-binding residues include Cys-62, Cys-65, and His-66.

As to quaternary structure, heterodimer of cytochromes b (large subunit) and c (small subunit).

It is found in the cell membrane. Its function is as follows. Component of the anaerobic respiratory chain that transforms nitrate to dinitrogen (denitrification). The chain is Nitric oxide reductase subunit C (norC) from Paracoccus denitrificans.